An 87-amino-acid polypeptide reads, in one-letter code: Large ribosomal subunit protein bL27 (87 aa).

Belongs to the bacterial ribosomal protein bL27 family.

The protein is Large ribosomal subunit protein bL27 of Wigglesworthia glossinidia brevipalpis.